Reading from the N-terminus, the 335-residue chain is L-tyrosine isonitrile synthase (335 aa).

This sequence belongs to the isocyanide synthase family.

The enzyme catalyses D-ribulose 5-phosphate + L-tyrosine = (2S)-3-(4-hydroxyphenyl)-2-isocyanopropanoate + hydroxyacetone + formaldehyde + phosphate + H2O + H(+). Functionally, involved in the biosynthesis of rhabduscin, a tyrosine derivative which is a potent inhibitor of phenoloxidase, a key component of the insect's innate immune system. Responsible for the synthesis of the isonitrile group on tyrosine using the C2 of ribulose 5-phosphate as the source of the carbon atom. The sequence is that of L-tyrosine isonitrile synthase from Xenorhabdus nematophila (strain ATCC 19061 / DSM 3370 / CCUG 14189 / LMG 1036 / NCIMB 9965 / AN6).